Consider the following 224-residue polypeptide: 7-cyano-7-deazaguanine synthase (224 aa).

10–20 (LSGGLDSATVV) provides a ligand contact to ATP. Positions 189, 199, 202, and 205 each coordinate Zn(2+).

Belongs to the QueC family. Zn(2+) serves as cofactor.

It carries out the reaction 7-carboxy-7-deazaguanine + NH4(+) + ATP = 7-cyano-7-deazaguanine + ADP + phosphate + H2O + H(+). Its pathway is purine metabolism; 7-cyano-7-deazaguanine biosynthesis. Catalyzes the ATP-dependent conversion of 7-carboxy-7-deazaguanine (CDG) to 7-cyano-7-deazaguanine (preQ(0)). The sequence is that of 7-cyano-7-deazaguanine synthase from Pseudomonas aeruginosa (strain LESB58).